Here is a 361-residue protein sequence, read N- to C-terminus: Deoxyribonuclease (361 aa).

A signal peptide spans 1 to 24 (MMHLLRRGAFAILLIVLLPSAALA). His149 is an active-site residue.

This sequence belongs to the DNase I family. It depends on Mg(2+) as a cofactor. Requires Ca(2+) as cofactor.

The protein localises to the secreted. In terms of biological role, DNA nuclease able to digest short and long DNA substrate. Is resistant to ionic strength and thus active at high salt concentration. The sequence is that of Deoxyribonuclease from Thioalkalivibrio sp. (strain K90mix).